The sequence spans 143 residues: Small ribosomal subunit protein bS6 (143 aa).

Positions 95 to 143 are disordered; sequence GPDTEQSFIMKSKDDKGDKPERRRRDDDENGDVGVSNDSDNDGGNAEAA. Positions 105–121 are enriched in basic and acidic residues; sequence KSKDDKGDKPERRRRDD.

Belongs to the bacterial ribosomal protein bS6 family.

Binds together with bS18 to 16S ribosomal RNA. This is Small ribosomal subunit protein bS6 from Xylella fastidiosa (strain M23).